The primary structure comprises 176 residues: NAD(P)H-quinone oxidoreductase subunit 6, chloroplastic (176 aa).

A run of 5 helical transmembrane segments spans residues 10–30 (FLLV…VLLT), 32–52 (PIFS…FHIP), 60–80 (AAQL…AVMF), 107–127 (IFVS…IWTT), and 152–172 (FFLP…GAIA).

Belongs to the complex I subunit 6 family. In terms of assembly, NDH is composed of at least 16 different subunits, 5 of which are encoded in the nucleus.

Its subcellular location is the plastid. It localises to the chloroplast thylakoid membrane. The enzyme catalyses a plastoquinone + NADH + (n+1) H(+)(in) = a plastoquinol + NAD(+) + n H(+)(out). It carries out the reaction a plastoquinone + NADPH + (n+1) H(+)(in) = a plastoquinol + NADP(+) + n H(+)(out). NDH shuttles electrons from NAD(P)H:plastoquinone, via FMN and iron-sulfur (Fe-S) centers, to quinones in the photosynthetic chain and possibly in a chloroplast respiratory chain. The immediate electron acceptor for the enzyme in this species is believed to be plastoquinone. Couples the redox reaction to proton translocation, and thus conserves the redox energy in a proton gradient. This Buxus microphylla (Littleleaf boxwood) protein is NAD(P)H-quinone oxidoreductase subunit 6, chloroplastic (ndhG).